We begin with the raw amino-acid sequence, 164 residues long: NADH-quinone oxidoreductase subunit I (164 aa).

2 4Fe-4S ferredoxin-type domains span residues 55–85 (LRRYPNGEERCIACKLCEAVCPAQAITIDAE) and 95–124 (TRYDIDMTKCIYCGFCEEACPVDAIVEGPN). [4Fe-4S] cluster is bound by residues Cys65, Cys68, Cys71, Cys75, Cys104, Cys107, Cys110, and Cys114.

It belongs to the complex I 23 kDa subunit family. NDH-1 is composed of 14 different subunits. Subunits NuoA, H, J, K, L, M, N constitute the membrane sector of the complex. It depends on [4Fe-4S] cluster as a cofactor.

Its subcellular location is the cell inner membrane. It carries out the reaction a quinone + NADH + 5 H(+)(in) = a quinol + NAD(+) + 4 H(+)(out). NDH-1 shuttles electrons from NADH, via FMN and iron-sulfur (Fe-S) centers, to quinones in the respiratory chain. The immediate electron acceptor for the enzyme in this species is believed to be ubiquinone. Couples the redox reaction to proton translocation (for every two electrons transferred, four hydrogen ions are translocated across the cytoplasmic membrane), and thus conserves the redox energy in a proton gradient. This Roseobacter denitrificans (strain ATCC 33942 / OCh 114) (Erythrobacter sp. (strain OCh 114)) protein is NADH-quinone oxidoreductase subunit I.